The sequence spans 294 residues: Cytidine deaminase (294 aa).

2 consecutive CMP/dCMP-type deaminase domains span residues 48–168 (DEDA…FGPK) and 186–294 (LTGD…VLLA). Position 89–91 (89–91 (NME)) interacts with substrate. Residue H102 participates in Zn(2+) binding. E104 functions as the Proton donor in the catalytic mechanism. The Zn(2+) site is built by C129 and C132.

Belongs to the cytidine and deoxycytidylate deaminase family. In terms of assembly, homodimer. Requires Zn(2+) as cofactor.

The enzyme catalyses cytidine + H2O + H(+) = uridine + NH4(+). It carries out the reaction 2'-deoxycytidine + H2O + H(+) = 2'-deoxyuridine + NH4(+). Its function is as follows. This enzyme scavenges exogenous and endogenous cytidine and 2'-deoxycytidine for UMP synthesis. In Escherichia coli O17:K52:H18 (strain UMN026 / ExPEC), this protein is Cytidine deaminase.